The following is a 476-amino-acid chain: Aspartyl/glutamyl-tRNA(Asn/Gln) amidotransferase subunit B (476 aa).

This sequence belongs to the GatB/GatE family. GatB subfamily. Heterotrimer of A, B and C subunits.

The catalysed reaction is L-glutamyl-tRNA(Gln) + L-glutamine + ATP + H2O = L-glutaminyl-tRNA(Gln) + L-glutamate + ADP + phosphate + H(+). The enzyme catalyses L-aspartyl-tRNA(Asn) + L-glutamine + ATP + H2O = L-asparaginyl-tRNA(Asn) + L-glutamate + ADP + phosphate + 2 H(+). Its function is as follows. Allows the formation of correctly charged Asn-tRNA(Asn) or Gln-tRNA(Gln) through the transamidation of misacylated Asp-tRNA(Asn) or Glu-tRNA(Gln) in organisms which lack either or both of asparaginyl-tRNA or glutaminyl-tRNA synthetases. The reaction takes place in the presence of glutamine and ATP through an activated phospho-Asp-tRNA(Asn) or phospho-Glu-tRNA(Gln). This chain is Aspartyl/glutamyl-tRNA(Asn/Gln) amidotransferase subunit B, found in Clostridium botulinum (strain Eklund 17B / Type B).